Reading from the N-terminus, the 249-residue chain is Tabinhibitin 4 (249 aa).

A signal peptide spans 1-23 (MTLNVYFVLLSPYSLQSVPLPLT). Positions 31-33 (RGD) match the Cell attachment site motif. The 144-residue stretch at 64-207 (LQKTNWLRGV…LKRALFTCNF (144 aa)) folds into the SCP domain. The Cell attachment site motif lies at 220 to 222 (RGD).

Belongs to the CRISP family. In terms of tissue distribution, expressed in salivary glands.

It localises to the secreted. In terms of biological role, inhibits platelet aggregation induced by all agonists tested (ADP, arachidonic acid, the thromboxane A2 analog U46619, thrombin, and snake venom snaclecs (TMVA that activates platelet through GPIB, and stejnulxin that specifically acts through GPVI (GP6))). May act by competing with fibrinogen for binding to glycoprotein IIb/IIIa (ITGA2B/ITGB3). The chain is Tabinhibitin 4 from Tabanus yao (Horsefly).